The primary structure comprises 147 residues: Ubiquitin-conjugating enzyme E2 D3 (147 aa).

In terms of domain architecture, UBC core spans 1-147; it reads MALKRINKEL…SREWTQKYAM (147 aa). Cysteine 21 and cysteine 107 form a disulfide bridge. The Glycyl thioester intermediate role is filled by cysteine 85.

Belongs to the ubiquitin-conjugating enzyme family. Interacts with SCF (SKP1-CUL1-F-box protein) E3 ubiquitin ligase complex; when Cullin is neddylated, the interaction between the E2 and the SCF complex is strengthened. Interacts with DAPK3. Interacts with BRCA1; the DNA damage checkpoint promotes the association with BRCA1 after ionizing radiation. Interacts non-covalently with ubiquitin. Interacts with E3 ubiquitin-protein ligase CBLC. Interacts with UBTD1. Interacts with RIGI and RNF135; involved in RIGI ubiquitination and activation. Phosphorylated by AURKB.

The protein localises to the cell membrane. Its subcellular location is the endosome membrane. It catalyses the reaction S-ubiquitinyl-[E1 ubiquitin-activating enzyme]-L-cysteine + [E2 ubiquitin-conjugating enzyme]-L-cysteine = [E1 ubiquitin-activating enzyme]-L-cysteine + S-ubiquitinyl-[E2 ubiquitin-conjugating enzyme]-L-cysteine.. It carries out the reaction S-ubiquitinyl-[E1 ubiquitin-activating enzyme]-L-cysteine + [acceptor protein]-L-lysine = [E1 ubiquitin-activating enzyme]-L-cysteine + N(6)-monoubiquitinyl-[acceptor protein]-L-lysine.. Its pathway is protein modification; protein ubiquitination. Its function is as follows. Accepts ubiquitin from the E1 complex and catalyzes its covalent attachment to other proteins. In vitro catalyzes 'Lys-11'-, as well as 'Lys-48'-linked polyubiquitination. Cooperates with the E2 CDC34 and the SCF(FBXW11) E3 ligase complex for the polyubiquitination of NFKBIA leading to its subsequent proteasomal degradation. Acts as an initiator E2, priming the phosphorylated NFKBIA target at positions 'Lys-21' and/or 'Lys-22' with a monoubiquitin. Ubiquitin chain elongation is then performed by CDC34, building ubiquitin chains from the UBE2D3-primed NFKBIA-linked ubiquitin. Also acts as an initiator E2, in conjunction with RNF8, for the priming of PCNA. Monoubiquitination of PCNA, and its subsequent polyubiquitination, are essential events in the operation of the DNA damage tolerance (DDT) pathway that is activated after DNA damage caused by UV or chemical agents during S-phase. Associates with the BRCA1/BARD1 E3 ligase complex to perform ubiquitination at DNA damage sites following ionizing radiation leading to DNA repair. Targets DAPK3 for ubiquitination which influences promyelocytic leukemia protein nuclear body (PML-NB) formation in the nucleus. In conjunction with the MDM2 and TOPORS E3 ligases, functions ubiquitination of p53/TP53. In conjunction with the CBL E3 ligase, targets EGFR for polyubiquitination at the plasma membrane as well as during its internalization and transport on endosomes. In conjunction with the STUB1 E3 quality control E3 ligase, ubiquitinates unfolded proteins to catalyze their immediate destruction. Together with RNF135, catalyzes the viral RNA-dependent 'Lys-63'-linked polyubiquitination of RIGI to activate the downstream signaling pathway that leads to interferon beta production. Together with ZNF598, catalyzes ubiquitination of 40S ribosomal proteins in response to ribosome collisions. In cooperation with the GATOR2 complex, catalyzes 'Lys-6'-linked ubiquitination of NPRL2. The chain is Ubiquitin-conjugating enzyme E2 D3 (UBE2D3) from Homo sapiens (Human).